Here is a 419-residue protein sequence, read N- to C-terminus: S-adenosylmethionine synthase (419 aa).

Residue H15 participates in ATP binding. D17 is a binding site for Mg(2+). E43 lines the K(+) pocket. L-methionine is bound by residues E56 and Q100. Residues 100–110 form a flexible loop region; it reads QSPDIAQGVNE. Residues 171-173, 248-249, D257, 263-264, A280, and K284 contribute to the ATP site; these read DGK, KF, and RK. Residue D257 coordinates L-methionine. Residue K288 coordinates L-methionine.

This sequence belongs to the AdoMet synthase family. As to quaternary structure, homotetramer; dimer of dimers. The cofactor is Mg(2+). Requires K(+) as cofactor.

It localises to the cytoplasm. The enzyme catalyses L-methionine + ATP + H2O = S-adenosyl-L-methionine + phosphate + diphosphate. It functions in the pathway amino-acid biosynthesis; S-adenosyl-L-methionine biosynthesis; S-adenosyl-L-methionine from L-methionine: step 1/1. Catalyzes the formation of S-adenosylmethionine (AdoMet) from methionine and ATP. The overall synthetic reaction is composed of two sequential steps, AdoMet formation and the subsequent tripolyphosphate hydrolysis which occurs prior to release of AdoMet from the enzyme. The sequence is that of S-adenosylmethionine synthase from Prochlorococcus marinus (strain MIT 9313).